Consider the following 551-residue polypeptide: Probable terminase, large subunit gp28 (551 aa).

The protein belongs to the T4likevirus large terminase family. As to quaternary structure, interacts with the terminase small subunit gp28. Mg(2+) is required as a cofactor.

The protein resides in the host cytoplasm. The terminase large subunit acts as an ATP driven molecular motor necessary for viral DNA translocation into empty capsids and as an endonuclease that cuts the viral genome to initiate and to end a packaging reaction. The terminase lies at a unique vertex of the procapsid and is composed of two subunits, a small terminase subunit involved in viral DNA recognition (packaging sequence), and a large terminase subunit possessing endonucleolytic and ATPase activities. Both terminase subunits heterooligomerize and are docked on the portal protein to form the packaging machine. The terminase large subunit exhibits endonuclease activity and cleaves the viral genome concatemer once the capsid is full (headful packaging). Once the capsid is packaged with the DNA, the terminase complex is substituted by neck proteins. This is Probable terminase, large subunit gp28 from Escherichia phage Mu (Bacteriophage Mu).